The sequence spans 459 residues: Methylenetetrahydrofolate--tRNA-(uracil-5-)-methyltransferase TrmFO (459 aa).

Residue 11 to 16 (GAGLAG) coordinates FAD.

This sequence belongs to the MnmG family. TrmFO subfamily. FAD is required as a cofactor.

The protein localises to the cytoplasm. The catalysed reaction is uridine(54) in tRNA + (6R)-5,10-methylene-5,6,7,8-tetrahydrofolate + NADH + H(+) = 5-methyluridine(54) in tRNA + (6S)-5,6,7,8-tetrahydrofolate + NAD(+). It catalyses the reaction uridine(54) in tRNA + (6R)-5,10-methylene-5,6,7,8-tetrahydrofolate + NADPH + H(+) = 5-methyluridine(54) in tRNA + (6S)-5,6,7,8-tetrahydrofolate + NADP(+). Catalyzes the folate-dependent formation of 5-methyl-uridine at position 54 (M-5-U54) in all tRNAs. The polypeptide is Methylenetetrahydrofolate--tRNA-(uracil-5-)-methyltransferase TrmFO (Synechococcus sp. (strain CC9311)).